Reading from the N-terminus, the 393-residue chain is Riboflavin biosynthesis protein RibBA (393 aa).

A DHBP synthase region spans residues 1–200; that stretch reads MQFDTIELAI…IKSLVAFRKA (200 aa). D-ribulose 5-phosphate is bound by residues 27–28, Asp-32, 139–143, and Glu-163; these read RE and RNGHT. Residue Glu-28 coordinates Mg(2+). A Mg(2+)-binding site is contributed by His-142. Positions 201 to 393 are GTP cyclohydrolase II; it reads VELNVNLKAK…TKKNKMGHLI (193 aa). 249–253 provides a ligand contact to GTP; that stretch reads RMHSA. The Zn(2+) site is built by Cys-254, Cys-265, and Cys-267. Residues Gln-270, 291–293, and Thr-313 each bind GTP; that span reads EGR. Asp-325 (proton acceptor; for GTP cyclohydrolase activity) is an active-site residue. Arg-327 (nucleophile; for GTP cyclohydrolase activity) is an active-site residue. 2 residues coordinate GTP: Ser-348 and Lys-353.

The protein in the N-terminal section; belongs to the DHBP synthase family. It in the C-terminal section; belongs to the GTP cyclohydrolase II family. It depends on Mg(2+) as a cofactor. Requires Mn(2+) as cofactor. Zn(2+) is required as a cofactor.

The catalysed reaction is D-ribulose 5-phosphate = (2S)-2-hydroxy-3-oxobutyl phosphate + formate + H(+). The enzyme catalyses GTP + 4 H2O = 2,5-diamino-6-hydroxy-4-(5-phosphoribosylamino)-pyrimidine + formate + 2 phosphate + 3 H(+). It functions in the pathway cofactor biosynthesis; riboflavin biosynthesis; 2-hydroxy-3-oxobutyl phosphate from D-ribulose 5-phosphate: step 1/1. Its pathway is cofactor biosynthesis; riboflavin biosynthesis; 5-amino-6-(D-ribitylamino)uracil from GTP: step 1/4. Its function is as follows. Catalyzes the conversion of D-ribulose 5-phosphate to formate and 3,4-dihydroxy-2-butanone 4-phosphate. Catalyzes the conversion of GTP to 2,5-diamino-6-ribosylamino-4(3H)-pyrimidinone 5'-phosphate (DARP), formate and pyrophosphate. This Staphylococcus epidermidis (strain ATCC 35984 / DSM 28319 / BCRC 17069 / CCUG 31568 / BM 3577 / RP62A) protein is Riboflavin biosynthesis protein RibBA.